We begin with the raw amino-acid sequence, 167 residues long: NAD(P)H-quinone oxidoreductase subunit I, chloroplastic (167 aa).

4Fe-4S ferredoxin-type domains are found at residues 55–84 (GRIH…VDWK) and 95–124 (LNYS…MTEE). [4Fe-4S] cluster is bound by residues cysteine 64, cysteine 67, cysteine 70, cysteine 74, cysteine 104, cysteine 107, cysteine 110, and cysteine 114.

The protein belongs to the complex I 23 kDa subunit family. In terms of assembly, NDH is composed of at least 16 different subunits, 5 of which are encoded in the nucleus. [4Fe-4S] cluster is required as a cofactor.

The protein localises to the plastid. The protein resides in the chloroplast thylakoid membrane. It carries out the reaction a plastoquinone + NADH + (n+1) H(+)(in) = a plastoquinol + NAD(+) + n H(+)(out). The enzyme catalyses a plastoquinone + NADPH + (n+1) H(+)(in) = a plastoquinol + NADP(+) + n H(+)(out). Its function is as follows. NDH shuttles electrons from NAD(P)H:plastoquinone, via FMN and iron-sulfur (Fe-S) centers, to quinones in the photosynthetic chain and possibly in a chloroplast respiratory chain. The immediate electron acceptor for the enzyme in this species is believed to be plastoquinone. Couples the redox reaction to proton translocation, and thus conserves the redox energy in a proton gradient. The polypeptide is NAD(P)H-quinone oxidoreductase subunit I, chloroplastic (Draba nemorosa (Woodland whitlowgrass)).